Reading from the N-terminus, the 117-residue chain is MHFQLEMVTRETVVIRLFGELDHHAVEQIRAKISAAIFQGTVTTIIWNLEGLSFMDSSGVGLVLGRMRELEAVAGRTILLNPSPTMRKVFQFSGLGPWMMDATEEQAIDRVRGIVNG.

The 114-residue stretch at 2–115 folds into the STAS domain; that stretch reads HFQLEMVTRE…QAIDRVRGIV (114 aa). Position 58 is a phosphoserine (serine 58).

Belongs to the anti-sigma-factor antagonist family. Post-translationally, phosphorylated by SpoIIAB on a serine residue.

Functionally, in the phosphorylated form it could act as an anti-anti-sigma factor that counteracts SpoIIAB and thus releases sigma f from inhibition. The polypeptide is Anti-sigma F factor antagonist (spoIIAA) (Lysinibacillus sphaericus (Bacillus sphaericus)).